A 345-amino-acid chain; its full sequence is Src kinase-associated phosphoprotein 1 (345 aa).

Residues 109–212 form the PH domain; the sequence is KIFKQGYLER…WVEQIQFLVK (104 aa). The disordered stretch occupies residues 226–274; that stretch reads ETYDDIESTESSPVVGLTNDSENSLQEDDVYESIPGDEETEESEDENYE. Acidic residues predominate over residues 250–272; that stretch reads LQEDDVYESIPGDEETEESEDEN. The SH3 domain maps to 283–344; that stretch reads FYGDYYQGLW…PKDYLTLAFD (62 aa).

It belongs to the SKAP family. In terms of assembly, homodimer. Phosphorylated on tyrosines.

The protein localises to the cytoplasm. It localises to the nucleus. The protein resides in the cell membrane. Positively regulates T-cell receptor signaling. Required for optimal conjugation between T-cells and antigen-presenting cells. In Xenopus tropicalis (Western clawed frog), this protein is Src kinase-associated phosphoprotein 1 (skap1).